The primary structure comprises 372 residues: Actin-related protein T3 (372 aa).

It belongs to the actin family. As to quaternary structure, interacts with PFN3. Ubiquitously expressed.

Its subcellular location is the cytoplasm. The protein resides in the cytoskeleton. It localises to the nucleus. This is Actin-related protein T3 (ACTRT3) from Homo sapiens (Human).